We begin with the raw amino-acid sequence, 297 residues long: TATA-box-binding protein (297 aa).

The interval 52 to 116 is disordered; the sequence is EEQQRQQQQA…ITPATPASES (65 aa). 2 stretches are compositionally biased toward low complexity: residues 56-78 and 104-114; these read RQQQQAQQSTSQQGNQGSGQTPQ and MTPITPATPAS. Repeat copies occupy residues 123–199 and 213–290.

Belongs to the TBP family. Belongs to the TFIID complex together with the TBP-associated factors (TAFs). Binds DNA as monomer. The N-terminal domain is extensively phosphorylated.

It localises to the nucleus. In terms of biological role, general transcription factor that functions at the core of the DNA-binding multiprotein factor TFIID. Binding of TFIID to the TATA box is the initial transcriptional step of the pre-initiation complex (PIC), playing a role in the activation of eukaryotic genes transcribed by RNA polymerase II. Members of the TBP family are differentially required to regulate transcription and development during early embryogenesis. Binds to the promoters of select genes. This is TATA-box-binding protein from Xenopus tropicalis (Western clawed frog).